Reading from the N-terminus, the 131-residue chain is MAMSDPIADMLTRIRNAQLAEKASVSMPSSKVKVAIAAVLKDEGYVEDFAVRQADGKANLEIALKYYAGRPVIERIERISKPGLRIYKGCDDIPRVMNGLGVAIVSTPKGVMTDRKARASKVGGEVLCIVA.

It belongs to the universal ribosomal protein uS8 family. In terms of assembly, part of the 30S ribosomal subunit. Contacts proteins S5 and S12.

Its function is as follows. One of the primary rRNA binding proteins, it binds directly to 16S rRNA central domain where it helps coordinate assembly of the platform of the 30S subunit. The protein is Small ribosomal subunit protein uS8 of Dechloromonas aromatica (strain RCB).